Reading from the N-terminus, the 286-residue chain is Eukaryotic translation initiation factor 3 subunit F-2 (286 aa).

The MPN domain maps to 11 to 147 (ILLQPLVLLH…MRLYTAVVMG (137 aa)).

Belongs to the eIF-3 subunit F family. As to quaternary structure, component of the eukaryotic translation initiation factor 3 (eIF-3) complex. The eIF-3 complex interacts with pix.

The protein localises to the cytoplasm. Functionally, component of the eukaryotic translation initiation factor 3 (eIF-3) complex, which is involved in protein synthesis of a specialized repertoire of mRNAs and, together with other initiation factors, stimulates binding of mRNA and methionyl-tRNAi to the 40S ribosome. The eIF-3 complex specifically targets and initiates translation of a subset of mRNAs involved in cell proliferation. The sequence is that of Eukaryotic translation initiation factor 3 subunit F-2 from Drosophila willistoni (Fruit fly).